Consider the following 190-residue polypeptide: (S)-2-hydroxypropylphosphonic acid epoxidase (190 aa).

Positions 10 to 60 (KAHLEALLATRKMTLEHLQDVRHDATQVYFDGLEHLQNVAQYLAIPLSEFF) constitute an HTH cro/C1-type domain. The segment at residues 20–40 (RKMTLEHLQDVRHDATQVYFD) is a DNA-binding region (H-T-H motif). Substrate-binding positions include Arg-87, Tyr-95, 125–128 (NGGH), and Glu-132. Fe cation is bound by residues His-128, Glu-132, and His-171. In terms of domain architecture, Cupin type-2 spans 128–176 (HGSREIVYVTRGAVRVRWVGDNDELKEDVLNEGDSIFILPNVPHSFTNH).

It belongs to the non-heme iron-dependent dioxygenase family. In terms of assembly, homotrimer. Fe(2+) serves as cofactor.

It catalyses the reaction (S)-2-hydroxypropylphosphonate + H2O2 = (1R,2S)-epoxypropylphosphonate + 2 H2O. Its pathway is antibiotic biosynthesis; fosfomycin biosynthesis. Functionally, non-heme-dependent dioxygenase that catalyzes the oxidative epoxidation of (S)-2-hydroxypropylphosphonate into (1R,2S)-epoxypropylphosphonate, the final step in the biosynthesis of fosfomycin antibiotic. This Pseudomonas syringae protein is (S)-2-hydroxypropylphosphonic acid epoxidase (hppE).